The sequence spans 649 residues: MISPAWSIFLIGTKIGLFLQVAPLSVMAKSCPSVCRCDAGFIYCNDRFLTSIPTGIPEDATTLYLQNNQINNAGIPSDLKNLLKVERIYLYHNSLDEFPTNLPKYVKELHLQENNIRTITYDSLSKIPYLEELRLDDNSVSAVSIEEGAFRDSNYLRLLFLSRNHLSTIPWGLPRTIEELRLDDNRIPTISSPSLQGLTSLKRLVLDGNLLNNHGLGDKVFFNLVNLTELSLVRNSLTAAPVNLPGTNLRKLYLQDNHINRVPPNAFSYLRQLYRLDMSNNNLSNLPQGIFDDLDNITQLILRNNPWYCGCKMKWVRDWLQSLPVKVNVRGLMCQAPEKVRGMAIKDLNAELFDCKDSGIVSTIQITTAIPNTVYPAQEQWPAPVTKQPDIKNPKLTKDHQTTGSPSRKTITITVKSVTSDTIHISWKLALPMTALRLSWLKLGHSPAFGSITETIVTGERSEYLVTALEPDSPYKVCMVPMETSNLYLFDETPVCIETETAPLRMYNPTTTLNREQEKEPYKNPNLPLAAIIGGAVALVTIALLALVCWYVHRNGSLFSRNCAYSKGRRRKDDYAEAGTKKDNSILEIRETSFQMLPISNEPISKEEFVIHTIFPPNGMNLYKNNHSESSSNRSYRDSGIPDSDHSHS.

Positions 1-28 are cleaved as a signal peptide; that stretch reads MISPAWSIFLIGTKIGLFLQVAPLSVMA. The region spanning 29–58 is the LRRNT domain; sequence KSCPSVCRCDAGFIYCNDRFLTSIPTGIPE. The Extracellular segment spans residues 29–528; sequence KSCPSVCRCD…KEPYKNPNLP (500 aa). Intrachain disulfides connect Cys31-Cys37 and Cys35-Cys44. An interaction with ADGRL3 region spans residues 38–67; sequence DAGFIYCNDRFLTSIPTGIPEDATTLYLQN. LRR repeat units lie at residues 59–80, 84–104, 105–126, 129–150, 155–176, 177–197, 200–220, 226–247, 248–269, and 272–293; these read DATT…SDLK, KVER…NLPK, YVKE…SLSK, YLEE…EGAF, YLRL…LPRT, IEEL…SLQG, SLKR…GDKV, NLTE…LPGT, NLRK…AFSY, and QLYR…IFDD. Asn226 carries an N-linked (GlcNAc...) asparagine glycan. Residues Asn282 and Asn296 are each glycosylated (N-linked (GlcNAc...) asparagine). One can recognise an LRRCT domain in the interval 305 to 357; that stretch reads NPWYCGCKMKWVRDWLQSLPVKVNVRGLMCQAPEKVRGMAIKDLNAELFDCKD. An intrachain disulfide couples Cys309 to Cys334. The interval 385 to 407 is disordered; it reads VTKQPDIKNPKLTKDHQTTGSPS. Basic and acidic residues predominate over residues 389 to 401; sequence PDIKNPKLTKDHQ. One can recognise a Fibronectin type-III domain in the interval 409 to 504; that stretch reads KTITITVKSV…VCIETETAPL (96 aa). A helical membrane pass occupies residues 529 to 549; the sequence is LAAIIGGAVALVTIALLALVC. At 550–649 the chain is on the cytoplasmic side; that stretch reads WYVHRNGSLF…GIPDSDHSHS (100 aa). Positions 622-649 are disordered; sequence LYKNNHSESSSNRSYRDSGIPDSDHSHS.

As to quaternary structure, monomer and homodimer. Self-associates (via leucine-rich repeats), giving rise to homooligomers. Interacts with FGFR1. Interacts (via extracellular domain) with ADGRL1/LPHN1 and LPHN2 (via olfactomedin-like domain). Interacts (via extracellular domain) with ADGRL3 (via olfactomedin-like domain); the interaction is direct. Interacts (via extracellular domain) with UNC5B and UNC5D (via extracellular domain); the interaction is direct. Identified in complexes composed of FLRT3, ADGRL3 and UNC5B, respectively FLRT3, ADGRL3 and UNC5D. May also interact (via extracellular domain) with UNC5A and UNC5C. Interacts (via cytoplasmic domain) with ROBO1. N-glycosylated. In terms of processing, proteolytic cleavage in the juxtamembrane region gives rise to a soluble ectodomain. Cleavage is probably effected by a metalloprotease.

It localises to the cell membrane. The protein resides in the presynaptic cell membrane. Its subcellular location is the endoplasmic reticulum membrane. It is found in the cell junction. The protein localises to the focal adhesion. It localises to the secreted. The protein resides in the cell projection. Its subcellular location is the axon. It is found in the growth cone membrane. In terms of biological role, functions in cell-cell adhesion, cell migration and axon guidance, exerting an attractive or repulsive role depending on its interaction partners. Plays a role in the spatial organization of brain neurons. Plays a role in vascular development in the retina. Plays a role in cell-cell adhesion via its interaction with ADGRL3 and probably also other latrophilins that are expressed at the surface of adjacent cells. Interaction with the intracellular domain of ROBO1 mediates axon attraction towards cells expressing NTN1. Mediates axon growth cone collapse and plays a repulsive role in neuron guidance via its interaction with UNC5B, and possibly also other UNC-5 family members. Promotes neurite outgrowth (in vitro). Mediates cell-cell contacts that promote an increase both in neurite number and in neurite length. Plays a role in the regulation of the density of glutamaergic synapses. Plays a role in fibroblast growth factor-mediated signaling cascades. Required for normal morphogenesis during embryonic development, but not for normal embryonic patterning. Required for normal ventral closure, headfold fusion and definitive endoderm migration during embryonic development. Required for the formation of a normal basement membrane and the maintenance of a normal anterior visceral endoderm during embryonic development. This chain is Leucine-rich repeat transmembrane protein FLRT3 (FLRT3), found in Pongo abelii (Sumatran orangutan).